The primary structure comprises 533 residues: L-aspartate oxidase 1 (533 aa).

FAD contacts are provided by residues 10–13 (SGLA), K32, 39–46 (ASDWAQGG), and D214. R281 serves as the catalytic Proton donor/acceptor. Residues E366 and 382–383 (SL) each bind FAD.

The protein belongs to the FAD-dependent oxidoreductase 2 family. NadB subfamily. The cofactor is FAD.

It localises to the cytoplasm. It carries out the reaction L-aspartate + O2 = iminosuccinate + H2O2. It functions in the pathway cofactor biosynthesis; NAD(+) biosynthesis; iminoaspartate from L-aspartate (oxidase route): step 1/1. Catalyzes the oxidation of L-aspartate to iminoaspartate, the first step in the de novo biosynthesis of NAD(+). The sequence is that of L-aspartate oxidase 1 (nadB1) from Ralstonia nicotianae (strain ATCC BAA-1114 / GMI1000) (Ralstonia solanacearum).